Here is a 378-residue protein sequence, read N- to C-terminus: Cobalt-precorrin-5B C(1)-methyltransferase (378 aa).

The protein belongs to the CbiD family.

The catalysed reaction is Co-precorrin-5B + S-adenosyl-L-methionine = Co-precorrin-6A + S-adenosyl-L-homocysteine. Its pathway is cofactor biosynthesis; adenosylcobalamin biosynthesis; cob(II)yrinate a,c-diamide from sirohydrochlorin (anaerobic route): step 6/10. In terms of biological role, catalyzes the methylation of C-1 in cobalt-precorrin-5B to form cobalt-precorrin-6A. This is Cobalt-precorrin-5B C(1)-methyltransferase from Synechocystis sp. (strain ATCC 27184 / PCC 6803 / Kazusa).